We begin with the raw amino-acid sequence, 93 residues long: Large ribosomal subunit protein uL23cz/uL23cy (93 aa).

The protein belongs to the universal ribosomal protein uL23 family. Part of the 50S ribosomal subunit.

It is found in the plastid. It localises to the chloroplast. Binds to 23S rRNA. This Coffea arabica (Arabian coffee) protein is Large ribosomal subunit protein uL23cz/uL23cy (rpl23-A).